A 160-amino-acid polypeptide reads, in one-letter code: Transcriptional regulator MraZ (160 aa).

SpoVT-AbrB domains are found at residues 5–51 (TFEK…GKAL) and 80–123 (MAKL…EREA).

It belongs to the MraZ family. In terms of assembly, forms oligomers.

The protein resides in the cytoplasm. It is found in the nucleoid. This chain is Transcriptional regulator MraZ, found in Phenylobacterium zucineum (strain HLK1).